Consider the following 436-residue polypeptide: Trigger factor (436 aa).

The PPIase FKBP-type domain maps to 163–248 (GDRVTIDFEG…VKKIEAAHLP (86 aa)).

This sequence belongs to the FKBP-type PPIase family. Tig subfamily.

The protein resides in the cytoplasm. It catalyses the reaction [protein]-peptidylproline (omega=180) = [protein]-peptidylproline (omega=0). Its function is as follows. Involved in protein export. Acts as a chaperone by maintaining the newly synthesized protein in an open conformation. Functions as a peptidyl-prolyl cis-trans isomerase. This chain is Trigger factor, found in Polaromonas naphthalenivorans (strain CJ2).